The sequence spans 250 residues: Probable transcriptional regulatory protein Emin_1151 (250 aa).

The protein belongs to the TACO1 family.

It localises to the cytoplasm. In Elusimicrobium minutum (strain Pei191), this protein is Probable transcriptional regulatory protein Emin_1151.